The primary structure comprises 181 residues: MFTRAVSRLSRKRPPSDIHDGDGSSSSGHQSLKSTAKWASSLENLLEDPEGVKRFREFLKKEFSEENVLFWLACEDFKKTEDKKQMQEKAKKIYMTFLSNKASSQVNVEGQSRLTEKILEEPHPLMFQKLQDQIFNLMKYDSYSRFLKSDLFLKHRRTEEEEEDPPDAQTAAKRASRIYNT.

The segment at 1 to 35 (MFTRAVSRLSRKRPPSDIHDGDGSSSSGHQSLKST) is disordered. Phosphoserine occurs at positions 24 and 41. Residues 41–156 (SLENLLEDPE…LKSDLFLKHR (116 aa)) form the RGS domain. A lipid anchor (S-palmitoyl cysteine) is attached at Cys74. The disordered stretch occupies residues 157 to 181 (RTEEEEEDPPDAQTAAKRASRIYNT). Ser176 is modified (phosphoserine).

Interacts with GNAZ, GNAI1 and GNAI3. Associates specifically with the activated, GTP-bound forms of GNAZ and GNAI3.

It localises to the cytoplasm. The protein localises to the cytosol. It is found in the nucleus. Functionally, regulates G protein-coupled receptor signaling cascades, including signaling downstream of the muscarinic acetylcholine receptor CHRM2. Inhibits signal transduction by increasing the GTPase activity of G protein alpha subunits, thereby driving them into their inactive GDP-bound form. Modulates the activity of potassium channels that are activated in response to CHRM2 signaling. Activity on GNAZ is inhibited by palmitoylation of the G-protein. This is Regulator of G-protein signaling 10 (Rgs10) from Rattus norvegicus (Rat).